We begin with the raw amino-acid sequence, 419 residues long: Gamma-glutamyl phosphate reductase (419 aa).

The protein belongs to the gamma-glutamyl phosphate reductase family.

Its subcellular location is the cytoplasm. The catalysed reaction is L-glutamate 5-semialdehyde + phosphate + NADP(+) = L-glutamyl 5-phosphate + NADPH + H(+). It functions in the pathway amino-acid biosynthesis; L-proline biosynthesis; L-glutamate 5-semialdehyde from L-glutamate: step 2/2. In terms of biological role, catalyzes the NADPH-dependent reduction of L-glutamate 5-phosphate into L-glutamate 5-semialdehyde and phosphate. The product spontaneously undergoes cyclization to form 1-pyrroline-5-carboxylate. The protein is Gamma-glutamyl phosphate reductase of Solidesulfovibrio magneticus (strain ATCC 700980 / DSM 13731 / RS-1) (Desulfovibrio magneticus).